The following is a 310-amino-acid chain: Ribonuclease Z (310 aa).

Zn(2+) is bound by residues His64, His66, Asp68, His69, His142, Asp213, and His271. Asp68 functions as the Proton acceptor in the catalytic mechanism.

Belongs to the RNase Z family. As to quaternary structure, homodimer. The cofactor is Zn(2+).

The enzyme catalyses Endonucleolytic cleavage of RNA, removing extra 3' nucleotides from tRNA precursor, generating 3' termini of tRNAs. A 3'-hydroxy group is left at the tRNA terminus and a 5'-phosphoryl group is left at the trailer molecule.. Its function is as follows. Zinc phosphodiesterase, which displays some tRNA 3'-processing endonuclease activity. Probably involved in tRNA maturation, by removing a 3'-trailer from precursor tRNA. This is Ribonuclease Z from Treponema pallidum (strain Nichols).